A 242-amino-acid chain; its full sequence is Biosynthetic peptidoglycan transglycosylase (242 aa).

The chain crosses the membrane as a helical span at residues 19-39; it reads ILAALAVFWGGGIALFSVVPV.

This sequence belongs to the glycosyltransferase 51 family.

The protein localises to the cell inner membrane. It catalyses the reaction [GlcNAc-(1-&gt;4)-Mur2Ac(oyl-L-Ala-gamma-D-Glu-L-Lys-D-Ala-D-Ala)](n)-di-trans,octa-cis-undecaprenyl diphosphate + beta-D-GlcNAc-(1-&gt;4)-Mur2Ac(oyl-L-Ala-gamma-D-Glu-L-Lys-D-Ala-D-Ala)-di-trans,octa-cis-undecaprenyl diphosphate = [GlcNAc-(1-&gt;4)-Mur2Ac(oyl-L-Ala-gamma-D-Glu-L-Lys-D-Ala-D-Ala)](n+1)-di-trans,octa-cis-undecaprenyl diphosphate + di-trans,octa-cis-undecaprenyl diphosphate + H(+). The protein operates within cell wall biogenesis; peptidoglycan biosynthesis. Functionally, peptidoglycan polymerase that catalyzes glycan chain elongation from lipid-linked precursors. This chain is Biosynthetic peptidoglycan transglycosylase, found in Salmonella paratyphi A (strain ATCC 9150 / SARB42).